The primary structure comprises 263 residues: Oxidoreductase tpcG (263 aa).

This sequence belongs to the avfA family. In terms of tissue distribution, specifically expressed in conidia.

Its pathway is secondary metabolite biosynthesis. In terms of biological role, oxidoreductase; part of the gene cluster that mediates the biosynthesis of trypacidin, a mycotoxin with antiprotozoal activity and that plays a role in the infection process. The pathway begins with the synthesis of atrochrysone thioester by the polyketide synthase (PKS) tpcC. The atrochrysone carboxyl ACP thioesterase tpcB then breaks the thioester bond and releases the atrochrysone carboxylic acid from tpcC. The decarboxylase tpcK converts atrochrysone carboxylic acid to atrochrysone which is further reduced into emodin anthrone. The next step is performed by the emodin anthrone oxygenase tpcL that catalyzes the oxidation of emodinanthrone to emodin. Emodin O-methyltransferase encoded by tpcA catalyzes methylation of the 8-hydroxy group of emodin to form questin. Ring cleavage of questin by questin oxidase tpcI leads to desmethylsulochrin via several intermediates including questin epoxide. Another methylation step catalyzed by tpcM leads to the formation of sulochrin which is further converted to monomethylsulfochrin by tpcH. Finally, the tpcJ catalyzes the conversion of monomethylsulfochrin to trypacidin. Trypacidin is toxic for human pulmonary and bronchial epithelial cells by initiating the intracellular formation of nitric oxide (NO) and hydrogen peroxide (H(2)O(2)), thus triggering host necrotic cell death. The trypacidin pathway is also able to produce endocrocin via a distinct route from the endocrocin Enc pathway. The sequence is that of Oxidoreductase tpcG from Aspergillus fumigatus (strain ATCC MYA-4609 / CBS 101355 / FGSC A1100 / Af293) (Neosartorya fumigata).